We begin with the raw amino-acid sequence, 452 residues long: COBRA-like protein 1 (452 aa).

Residues 1–33 (MGFFLCSSSSIFFKFGISIIFLVSFSGLTPSEA) form the signal peptide. Residues Asn-42, Asn-167, Asn-175, Asn-214, Asn-239, Asn-254, Asn-323, Asn-338, and Asn-357 are each glycosylated (N-linked (GlcNAc...) asparagine). The GPI-anchor amidated serine moiety is linked to residue Ser-432. Positions 433 to 452 (VGSLFAAMALLLIVFLHGNL) are cleaved as a propeptide — removed in mature form.

The protein belongs to the COBRA family. Expressed in roots, stems, leaves, flowers and siliques.

It localises to the cell membrane. This is COBRA-like protein 1 (COBL1) from Arabidopsis thaliana (Mouse-ear cress).